Here is a 512-residue protein sequence, read N- to C-terminus: Probable multidrug resistance protein EmrY (512 aa).

Over 1–8 (MAITKSTP) the chain is Cytoplasmic. The chain crosses the membrane as a helical span at residues 9-29 (APLTGGTLWCVTIALSLATFM). Gln30 is a topological domain (periplasmic). A helical membrane pass occupies residues 31 to 51 (MLDSTISNVAIPTISGFLGAS). The Cytoplasmic portion of the chain corresponds to 52 to 53 (TD). A helical transmembrane segment spans residues 54–74 (EGTWVITSFGVANAIAIPVTG). Over 75–84 (RLAQRIGELR) the chain is Periplasmic. The next 2 membrane-spanning stretches (helical) occupy residues 85–105 (LFLL…LSTN) and 106–126 (LDVL…LIPL). Residues 127 to 141 (SQSLLLRNYPPEKRT) lie on the Periplasmic side of the membrane. A helical transmembrane segment spans residues 142-162 (FALALWSMTVIIAPICGPILG). At 163-172 (GYICDNFSWG) the chain is on the cytoplasmic side. Residues 173-193 (WIFLINVPMGIIVLTLCLTLL) traverse the membrane as a helical segment. At 194 to 204 (KGRETETSPVK) the chain is on the periplasmic side. The helical transmembrane segment at 205-225 (MNLPGLTLLVLGVGGLQIMLD) threads the bilayer. Residues 226–234 (KGRDLDWFN) lie on the Cytoplasmic side of the membrane. The helical transmembrane segment at 235–255 (SSTIIILTVVSVISLISLVIW) threads the bilayer. The Periplasmic segment spans residues 256–273 (ESTSENPILDLSLFKSRN). A helical transmembrane segment spans residues 274–294 (FTIGIVSITCAYLFYSGAIVL). Topologically, residues 295–307 (MPQLLQETMGYNA) are cytoplasmic. Residues 308 to 328 (IWAGLAYAPIGIMPLLISPLI) traverse the membrane as a helical segment. Residues 329–338 (GRYGNKIDMR) are Periplasmic-facing. The chain crosses the membrane as a helical span at residues 339–359 (LLVTFSFLMYAVCYYWRSVTF). Residues 360–364 (MPTID) are Cytoplasmic-facing. Residues 365 to 385 (FTGIILPQFFQGFAVACFFLP) form a helical membrane-spanning segment. The Periplasmic segment spans residues 386 to 486 (LTTISFSGLP…LSISANEIFR (101 aa)). A helical transmembrane segment spans residues 487–507 (MAAIAFILLTVLVWFAKPPFT). Topologically, residues 508-512 (AKGVG) are cytoplasmic.

Belongs to the major facilitator superfamily. EmrB family. Part of the tripartite efflux system EmrYK-TolC, which is composed of an inner membrane transporter, EmrY, a membrane fusion protein, EmrK, and an outer membrane component, TolC. The complex forms a large protein conduit and can translocate molecules across both the inner and outer membranes.

It localises to the cell inner membrane. Part of the tripartite efflux system EmrYK-TolC, which confers resistance to various drugs. This chain is Probable multidrug resistance protein EmrY (emrY), found in Escherichia coli (strain K12).